A 223-amino-acid chain; its full sequence is Proteasome subunit beta type-1 (223 aa).

The protein belongs to the peptidase T1B family. As to quaternary structure, the 26S proteasome consists of a 20S proteasome core and two 19S regulatory subunits. The 20S proteasome core is composed of 28 subunits that are arranged in four stacked rings, resulting in a barrel-shaped structure. The two end rings are each formed by seven alpha subunits, and the two central rings are each formed by seven beta subunits. The catalytic chamber with the active sites is on the inside of the barrel.

It is found in the cytoplasm. The protein localises to the nucleus. Its function is as follows. Non-catalytic component of the proteasome, a multicatalytic proteinase complex which is characterized by its ability to cleave peptides with Arg, Phe, Tyr, Leu, and Glu adjacent to the leaving group at neutral or slightly basic pH. The proteasome has an ATP-dependent proteolytic activity. This Petunia hybrida (Petunia) protein is Proteasome subunit beta type-1 (PBF1).